A 131-amino-acid polypeptide reads, in one-letter code: MSMSDPIADMLTRIRNGQMVEKVSVSMPSSKVKVAIAQVLKDEGYIDDFAVKAEGAKSELNIALKYYAGRPVIERIERVSKPGLRVYRGRNDIPQVMNGLGVAIVSTPKGVMTDRKARATGVGGEVICYVA.

This sequence belongs to the universal ribosomal protein uS8 family. As to quaternary structure, part of the 30S ribosomal subunit. Contacts proteins S5 and S12.

In terms of biological role, one of the primary rRNA binding proteins, it binds directly to 16S rRNA central domain where it helps coordinate assembly of the platform of the 30S subunit. This chain is Small ribosomal subunit protein uS8, found in Burkholderia lata (strain ATCC 17760 / DSM 23089 / LMG 22485 / NCIMB 9086 / R18194 / 383).